The sequence spans 237 residues: Ribonuclease 3 (237 aa).

The region spanning 4–130 (IQILFQTLNI…LFGAIYLDLG (127 aa)) is the RNase III domain. Glutamate 45 lines the Mg(2+) pocket. The active site involves aspartate 49. Mg(2+) is bound by residues aspartate 116 and glutamate 119. Glutamate 119 is an active-site residue. A DRBM domain is found at 154 to 222 (DFKTQLQEIV…AQQALSKVAK (69 aa)).

Belongs to the ribonuclease III family. Homodimer. Mg(2+) is required as a cofactor.

Its subcellular location is the cytoplasm. It carries out the reaction Endonucleolytic cleavage to 5'-phosphomonoester.. Its function is as follows. Digests double-stranded RNA. Involved in the processing of primary rRNA transcript to yield the immediate precursors to the large and small rRNAs (23S and 16S). Processes some mRNAs, and tRNAs when they are encoded in the rRNA operon. Processes pre-crRNA and tracrRNA of type II CRISPR loci if present in the organism. In Aster yellows witches'-broom phytoplasma (strain AYWB), this protein is Ribonuclease 3.